The sequence spans 365 residues: S-adenosylmethionine:tRNA ribosyltransferase-isomerase (365 aa).

It belongs to the QueA family. In terms of assembly, monomer.

Its subcellular location is the cytoplasm. The enzyme catalyses 7-aminomethyl-7-carbaguanosine(34) in tRNA + S-adenosyl-L-methionine = epoxyqueuosine(34) in tRNA + adenine + L-methionine + 2 H(+). The protein operates within tRNA modification; tRNA-queuosine biosynthesis. Transfers and isomerizes the ribose moiety from AdoMet to the 7-aminomethyl group of 7-deazaguanine (preQ1-tRNA) to give epoxyqueuosine (oQ-tRNA). The polypeptide is S-adenosylmethionine:tRNA ribosyltransferase-isomerase (Rickettsia africae (strain ESF-5)).